A 420-amino-acid polypeptide reads, in one-letter code: WD repeat-containing protein jip5 (420 aa).

6 WD repeats span residues 9–48 (PLSADLFSQALHPKEPVVSVGLSSGHVQTFRLPSDEVDSD), 72–111 (RHKGSCRCLGFGVDGEMLYSAGTDGLVKAAKAETGVVENK), 117–158 (DKNG…SKVS), 221–262 (VSSV…DQDE), 271–314 (GGGE…VVSE), and 318–355 (DETEGVVGLGFDVEGRMVSGGGQIVKVWHEAVDSGDGV). A disordered region spans residues 39–63 (RLPSDEVDSDDDGASTSSSRTGRGH). The disordered stretch occupies residues 350–420 (DSGDGVNGNE…QAVMAFHDLD (71 aa)). A compositionally biased stretch (acidic residues) spans 368-387 (DDSDEDSDDGDDDDDSGDSD). Basic residues predominate over residues 394 to 406 (DARKKRKKGKTPK).

Belongs to the WD repeat WDR55 family.

It localises to the nucleus. The protein resides in the nucleolus. This Aspergillus terreus (strain NIH 2624 / FGSC A1156) protein is WD repeat-containing protein jip5 (jip5).